The primary structure comprises 54 residues: Large ribosomal subunit protein bL33B (54 aa).

Belongs to the bacterial ribosomal protein bL33 family.

This Mycobacterium sp. (strain JLS) protein is Large ribosomal subunit protein bL33B.